Reading from the N-terminus, the 772-residue chain is Heat shock protein 88 (772 aa).

Disordered stretches follow at residues threonine 496–lysine 519 and leucine 729–aspartate 772. Positions alanine 497–alanine 513 are enriched in low complexity. Positions lysine 735–aspartate 772 are enriched in basic and acidic residues.

This sequence belongs to the heat shock protein 70 family.

Its function is as follows. May function in protein folding and assembly, and disassembly of protein complexes. This chain is Heat shock protein 88 (hspH), found in Dictyostelium discoideum (Social amoeba).